The chain runs to 70 residues: Small ribosomal subunit protein bS21 (70 aa).

This sequence belongs to the bacterial ribosomal protein bS21 family.

In Albidiferax ferrireducens (strain ATCC BAA-621 / DSM 15236 / T118) (Rhodoferax ferrireducens), this protein is Small ribosomal subunit protein bS21.